Consider the following 80-residue polypeptide: Serine palmitoyltransferase small subunit B (80 aa).

Residues 1 to 11 are Cytoplasmic-facing; the sequence is MDVKHIKDYLS. A helical membrane pass occupies residues 12-29; sequence WLYYQYLLITCSYVLEPW. Residues 30 to 36 lie on the Lumenal side of the membrane; that stretch reads EQSIFNT. The chain crosses the membrane as a helical span at residues 37 to 57; sequence LLLTIIAMVIYSSYIFIPIHV. Over 58 to 80 the chain is Cytoplasmic; sequence RLAVEFFSGIFGGQHESTVALMS.

This sequence belongs to the SPTSS family. SPTSSB subfamily. In terms of assembly, component of the serine palmitoyltransferase (SPT) complex, which is composed of SPTLC1, SPTLC2 or SPTLC3 and SPTSSA or SPTSSB. The heterodimer consisting of SPTLC1 and SPTLC2/SPTLC3 forms the catalytic core of the enzyme, while SPTSSA or SPTSSB subunits determine substrate specificity. SPT also interacts with ORMDL proteins, especially ORMDL3, which negatively regulate SPT activity in the presence of ceramides.

The protein localises to the endoplasmic reticulum membrane. The protein operates within lipid metabolism; sphingolipid metabolism. Functionally, component of the serine palmitoyltransferase multisubunit enzyme (SPT) that catalyzes the initial and rate-limiting step in sphingolipid biosynthesis by condensing L-serine and activated acyl-CoA (most commonly palmitoyl-CoA) to form long-chain bases. The SPT complex is composed of SPTLC1, SPTLC2 or SPTLC3 and SPTSSA or SPTSSB. Within this complex, the heterodimer consisting of SPTLC1 and SPTLC2/SPTLC3 forms the catalytic core. Within the SPT complex, SPTSSB stimulates the catalytic activity and plays a role in substrate specificity. SPT complexes with this subunit showing a preference for longer acyl-CoAs. The SPTLC1-SPTLC2-SPTSSB complex shows a strong preference for C18-CoA substrate, while the SPTLC1-SPTLC3-SPTSSB isozyme displays an ability to use a broader range of acyl-CoAs, without apparent preference. The protein is Serine palmitoyltransferase small subunit B (sptssb) of Xenopus tropicalis (Western clawed frog).